Reading from the N-terminus, the 557-residue chain is Membrane protein insertase YidC (557 aa).

Residues 7-27 (ILLVALAVVSYLLVLQWNQDY) form a helical membrane-spanning segment. Residues 42 to 77 (ASPALPETVPGDSSTSADVPTAGSGNQVPDSAASTA) are disordered. Residues 52-77 (GDSSTSADVPTAGSGNQVPDSAASTA) show a composition bias toward polar residues. 3 consecutive transmembrane segments (helical) span residues 370 to 390 (WGWS…PLSA), 436 to 456 (LGGC…YWVL), and 514 to 534 (PIIF…YWVV).

This sequence belongs to the OXA1/ALB3/YidC family. Type 1 subfamily. Interacts with the Sec translocase complex via SecD. Specifically interacts with transmembrane segments of nascent integral membrane proteins during membrane integration.

The protein localises to the cell inner membrane. In terms of biological role, required for the insertion and/or proper folding and/or complex formation of integral membrane proteins into the membrane. Involved in integration of membrane proteins that insert both dependently and independently of the Sec translocase complex, as well as at least some lipoproteins. Aids folding of multispanning membrane proteins. This Azotobacter vinelandii (strain DJ / ATCC BAA-1303) protein is Membrane protein insertase YidC.